The following is a 358-amino-acid chain: Photosystem II protein D1 (358 aa).

A run of 3 helical transmembrane segments spans residues 28-45, 117-132, and 141-155; these read YVGW…AAAI, HFLI…QWEL, and WICV…AAFA. His117 is a binding site for chlorophyll a. Position 125 (Trp125) interacts with pheophytin a. The [CaMn4O5] cluster site is built by Asp169 and Glu188. A helical transmembrane segment spans residues 196-217; it reads FHMIGVAGMFGGSLFSAMHGSL. His197 serves as a coordination point for chlorophyll a. A quinone-binding positions include His214 and 263 to 264; that span reads SF. Fe cation is bound at residue His214. His271 is a binding site for Fe cation. Residues 273–287 form a helical membrane-spanning segment; the sequence is FLAAWPVICIWITSL. [CaMn4O5] cluster is bound by residues His331, Glu332, Asp341, and Ala343. The propeptide occupies 344-358; it reads AAESTPVALIAPAIG.

This sequence belongs to the reaction center PufL/M/PsbA/D family. In terms of assembly, PSII is composed of 1 copy each of membrane proteins PsbA, PsbB, PsbC, PsbD, PsbE, PsbF, PsbH, PsbI, PsbJ, PsbK, PsbL, PsbM, PsbT, PsbX, PsbY, Psb30/Ycf12, peripheral proteins PsbO, CyanoQ (PsbQ), PsbU, PsbV and a large number of cofactors. It forms dimeric complexes. Requires The D1/D2 heterodimer binds P680, chlorophylls that are the primary electron donor of PSII, and subsequent electron acceptors. It shares a non-heme iron and each subunit binds pheophytin, quinone, additional chlorophylls, carotenoids and lipids. D1 provides most of the ligands for the Mn4-Ca-O5 cluster of the oxygen-evolving complex (OEC). There is also a Cl(-1) ion associated with D1 and D2, which is required for oxygen evolution. The PSII complex binds additional chlorophylls, carotenoids and specific lipids. as cofactor. In terms of processing, tyr-160 forms a radical intermediate that is referred to as redox-active TyrZ, YZ or Y-Z. C-terminally processed by CtpA; processing is essential to allow assembly of the oxygen-evolving complex and thus photosynthetic growth.

Its subcellular location is the cellular thylakoid membrane. The enzyme catalyses 2 a plastoquinone + 4 hnu + 2 H2O = 2 a plastoquinol + O2. In terms of biological role, photosystem II (PSII) is a light-driven water:plastoquinone oxidoreductase that uses light energy to abstract electrons from H(2)O, generating O(2) and a proton gradient subsequently used for ATP formation. It consists of a core antenna complex that captures photons, and an electron transfer chain that converts photonic excitation into a charge separation. The D1/D2 (PsbA/PsbD) reaction center heterodimer binds P680, the primary electron donor of PSII as well as several subsequent electron acceptors. This chain is Photosystem II protein D1, found in Prochlorococcus marinus (strain MIT 9313).